Here is a 123-residue protein sequence, read N- to C-terminus: Large ribosomal subunit protein bL19 (123 aa).

Belongs to the bacterial ribosomal protein bL19 family.

This protein is located at the 30S-50S ribosomal subunit interface and may play a role in the structure and function of the aminoacyl-tRNA binding site. The sequence is that of Large ribosomal subunit protein bL19 from Thermomicrobium roseum (strain ATCC 27502 / DSM 5159 / P-2).